A 316-amino-acid polypeptide reads, in one-letter code: Beta-ketoacyl-[acyl-carrier-protein] synthase III (316 aa).

Catalysis depends on residues Cys-112 and His-243. The ACP-binding stretch occupies residues 244 to 248; the sequence is QANLR. Asn-273 is an active-site residue.

This sequence belongs to the thiolase-like superfamily. FabH family. In terms of assembly, homodimer.

The protein localises to the cytoplasm. The enzyme catalyses malonyl-[ACP] + acetyl-CoA + H(+) = 3-oxobutanoyl-[ACP] + CO2 + CoA. Its pathway is lipid metabolism; fatty acid biosynthesis. Catalyzes the condensation reaction of fatty acid synthesis by the addition to an acyl acceptor of two carbons from malonyl-ACP. Catalyzes the first condensation reaction which initiates fatty acid synthesis and may therefore play a role in governing the total rate of fatty acid production. Possesses both acetoacetyl-ACP synthase and acetyl transacylase activities. Its substrate specificity determines the biosynthesis of branched-chain and/or straight-chain of fatty acids. The chain is Beta-ketoacyl-[acyl-carrier-protein] synthase III from Histophilus somni (strain 2336) (Haemophilus somnus).